Consider the following 362-residue polypeptide: MSTPLSLQALAKKILATQHISKNHYFILKYCGLWWHGAPIMFSTNEDNQLMIKSAIFKDGLELNLALMKAVQENNYDLIELFTEWGADINSSLVTVNTEHTWNFCRELGAKILNEMDIVQIFYKIHRIKTSSNIILCHKLLSNNPLFQNIEELKIIICCFLEKISINFILNEITLNEMLARLWYSMAVRYHLTEAIQYFYQRYRHFKDWRLICGLSFNNVSDLHEIYHIKKVDMNIDEMMYLACMRDSNFLTIFYCFVLGANINRAMVTSVKNFYTNNLFFCIDLGANAFEESLELAKQKNHDILVEILSFKDFYNSNVSLLSLKTTDPEKINALLKNYRSKNIMRYKKLCPKIIRWARFII.

This sequence belongs to the asfivirus MGF 360 family.

Its function is as follows. Plays a role in virus cell tropism, and may be required for efficient virus replication in macrophages. The protein is Protein MGF 360-2L of African swine fever virus (strain Badajoz 1971 Vero-adapted) (Ba71V).